Consider the following 320-residue polypeptide: Methionyl-tRNA formyltransferase (320 aa).

112-115 lines the (6S)-5,6,7,8-tetrahydrofolate pocket; sequence SLLP.

This sequence belongs to the Fmt family.

It catalyses the reaction L-methionyl-tRNA(fMet) + (6R)-10-formyltetrahydrofolate = N-formyl-L-methionyl-tRNA(fMet) + (6S)-5,6,7,8-tetrahydrofolate + H(+). Functionally, attaches a formyl group to the free amino group of methionyl-tRNA(fMet). The formyl group appears to play a dual role in the initiator identity of N-formylmethionyl-tRNA by promoting its recognition by IF2 and preventing the misappropriation of this tRNA by the elongation apparatus. This Allorhizobium ampelinum (strain ATCC BAA-846 / DSM 112012 / S4) (Agrobacterium vitis (strain S4)) protein is Methionyl-tRNA formyltransferase.